The following is an 88-amino-acid chain: MIDKKQKQKIVSEFGKNEGDTGSVGVQIALITGRIKYLTEHLKINKKDHSSKRGLLKLVGQRRSLLQYYQKKDLEAYRALISKLGLRK.

It belongs to the universal ribosomal protein uS15 family. As to quaternary structure, part of the 30S ribosomal subunit. Forms a bridge to the 50S subunit in the 70S ribosome, contacting the 23S rRNA.

One of the primary rRNA binding proteins, it binds directly to 16S rRNA where it helps nucleate assembly of the platform of the 30S subunit by binding and bridging several RNA helices of the 16S rRNA. Functionally, forms an intersubunit bridge (bridge B4) with the 23S rRNA of the 50S subunit in the ribosome. The chain is Small ribosomal subunit protein uS15 from Borreliella afzelii (strain PKo) (Borrelia afzelii).